The sequence spans 279 residues: Oxygen-dependent coproporphyrinogen-III oxidase (279 aa).

Ser-102 is a binding site for substrate. His-106 and His-116 together coordinate a divalent metal cation. Catalysis depends on His-116, which acts as the Proton donor. A substrate-binding site is contributed by Asn-118–Arg-120. 2 residues coordinate a divalent metal cation: His-149 and His-179. The important for dimerization stretch occupies residues Tyr-244–Ala-279.

The protein belongs to the aerobic coproporphyrinogen-III oxidase family. In terms of assembly, homodimer. Requires a divalent metal cation as cofactor.

It is found in the cytoplasm. The enzyme catalyses coproporphyrinogen III + O2 + 2 H(+) = protoporphyrinogen IX + 2 CO2 + 2 H2O. The protein operates within porphyrin-containing compound metabolism; protoporphyrin-IX biosynthesis; protoporphyrinogen-IX from coproporphyrinogen-III (O2 route): step 1/1. Involved in the heme biosynthesis. Catalyzes the aerobic oxidative decarboxylation of propionate groups of rings A and B of coproporphyrinogen-III to yield the vinyl groups in protoporphyrinogen-IX. This is Oxygen-dependent coproporphyrinogen-III oxidase from Rickettsia bellii (strain OSU 85-389).